A 499-amino-acid chain; its full sequence is Glycerol kinase (499 aa).

Threonine 12 provides a ligand contact to ADP. Threonine 12, threonine 13, and serine 14 together coordinate ATP. Threonine 12 is a sn-glycerol 3-phosphate binding site. Arginine 16 contacts ADP. Residues arginine 82, glutamate 83, tyrosine 134, and aspartate 240 each contribute to the sn-glycerol 3-phosphate site. Positions 82, 83, 134, 240, and 241 each coordinate glycerol. ADP-binding residues include threonine 262 and glycine 306. Residues threonine 262, glycine 306, glutamine 310, and glycine 412 each contribute to the ATP site. ADP-binding residues include glycine 412 and asparagine 416.

It belongs to the FGGY kinase family.

It catalyses the reaction glycerol + ATP = sn-glycerol 3-phosphate + ADP + H(+). The protein operates within polyol metabolism; glycerol degradation via glycerol kinase pathway; sn-glycerol 3-phosphate from glycerol: step 1/1. Inhibited by fructose 1,6-bisphosphate (FBP). Key enzyme in the regulation of glycerol uptake and metabolism. Catalyzes the phosphorylation of glycerol to yield sn-glycerol 3-phosphate. The polypeptide is Glycerol kinase (Nocardia farcinica (strain IFM 10152)).